Reading from the N-terminus, the 309-residue chain is Methionyl-tRNA formyltransferase (309 aa).

107 to 110 (SLLP) serves as a coordination point for (6S)-5,6,7,8-tetrahydrofolate.

It belongs to the Fmt family.

The catalysed reaction is L-methionyl-tRNA(fMet) + (6R)-10-formyltetrahydrofolate = N-formyl-L-methionyl-tRNA(fMet) + (6S)-5,6,7,8-tetrahydrofolate + H(+). In terms of biological role, attaches a formyl group to the free amino group of methionyl-tRNA(fMet). The formyl group appears to play a dual role in the initiator identity of N-formylmethionyl-tRNA by promoting its recognition by IF2 and preventing the misappropriation of this tRNA by the elongation apparatus. This Borrelia hermsii (strain HS1 / DAH) protein is Methionyl-tRNA formyltransferase.